Here is a 105-residue protein sequence, read N- to C-terminus: uncharacterized protein (105 aa).

This is an uncharacterized protein from Schizosaccharomyces pombe (strain 972 / ATCC 24843) (Fission yeast).